The chain runs to 482 residues: Bifunctional protein GlmU (482 aa).

The tract at residues 1–238 (MSAIRPAAVV…HREIAGINNR (238 aa)) is pyrophosphorylase. UDP-N-acetyl-alpha-D-glucosamine is bound by residues 12–15 (LAAG), K26, Q79, and 84–85 (GT). Mg(2+) is bound at residue D110. UDP-N-acetyl-alpha-D-glucosamine-binding residues include G147, E163, N178, and N236. Position 236 (N236) interacts with Mg(2+). Residues 239–259 (VQLAEARRILNDRLLTGAMLA) form a linker region. The N-acetyltransferase stretch occupies residues 260–482 (GVTVVDPATT…AVSREADGED (223 aa)). UDP-N-acetyl-alpha-D-glucosamine is bound by residues R341 and K359. The Proton acceptor role is filled by H371. UDP-N-acetyl-alpha-D-glucosamine contacts are provided by Y374 and N385. Acetyl-CoA contacts are provided by residues A388, 394 to 395 (NY), S413, A431, and R448. Residues 460–482 (RKRPGSAAAKAAEAVSREADGED) are disordered. Residues 464 to 473 (GSAAAKAAEA) show a composition bias toward low complexity.

The protein in the N-terminal section; belongs to the N-acetylglucosamine-1-phosphate uridyltransferase family. It in the C-terminal section; belongs to the transferase hexapeptide repeat family. In terms of assembly, homotrimer. Mg(2+) is required as a cofactor.

The protein resides in the cytoplasm. The catalysed reaction is alpha-D-glucosamine 1-phosphate + acetyl-CoA = N-acetyl-alpha-D-glucosamine 1-phosphate + CoA + H(+). It carries out the reaction N-acetyl-alpha-D-glucosamine 1-phosphate + UTP + H(+) = UDP-N-acetyl-alpha-D-glucosamine + diphosphate. The protein operates within nucleotide-sugar biosynthesis; UDP-N-acetyl-alpha-D-glucosamine biosynthesis; N-acetyl-alpha-D-glucosamine 1-phosphate from alpha-D-glucosamine 6-phosphate (route II): step 2/2. Its pathway is nucleotide-sugar biosynthesis; UDP-N-acetyl-alpha-D-glucosamine biosynthesis; UDP-N-acetyl-alpha-D-glucosamine from N-acetyl-alpha-D-glucosamine 1-phosphate: step 1/1. It participates in bacterial outer membrane biogenesis; LPS lipid A biosynthesis. Functionally, catalyzes the last two sequential reactions in the de novo biosynthetic pathway for UDP-N-acetylglucosamine (UDP-GlcNAc). The C-terminal domain catalyzes the transfer of acetyl group from acetyl coenzyme A to glucosamine-1-phosphate (GlcN-1-P) to produce N-acetylglucosamine-1-phosphate (GlcNAc-1-P), which is converted into UDP-GlcNAc by the transfer of uridine 5-monophosphate (from uridine 5-triphosphate), a reaction catalyzed by the N-terminal domain. The chain is Bifunctional protein GlmU from Streptomyces coelicolor (strain ATCC BAA-471 / A3(2) / M145).